A 273-amino-acid polypeptide reads, in one-letter code: Putative peptidyl-prolyl cis-trans isomerase Cbf2 (273 aa).

Residues 1 to 21 (MKKFSLVAATLIAGVVLNVNA) form the signal peptide. Residues 131 to 228 (PARVQAKHIL…FGYHVILKEN (98 aa)) form the PpiC domain.

It carries out the reaction [protein]-peptidylproline (omega=180) = [protein]-peptidylproline (omega=0). This chain is Putative peptidyl-prolyl cis-trans isomerase Cbf2 (cbf2), found in Campylobacter jejuni subsp. jejuni serotype O:2 (strain ATCC 700819 / NCTC 11168).